The chain runs to 146 residues: Transcriptional regulator MraZ (146 aa).

SpoVT-AbrB domains are found at residues 9 to 55 (ASAL…PRPA) and 81 to 124 (AMDV…DVQR).

This sequence belongs to the MraZ family. Forms oligomers.

The protein resides in the cytoplasm. It localises to the nucleoid. The polypeptide is Transcriptional regulator MraZ (Methylibium petroleiphilum (strain ATCC BAA-1232 / LMG 22953 / PM1)).